The following is a 66-amino-acid chain: MDPPARKEKSKVKEPAFRVEKAKQKSAQQELKQRQRAEIYALNRVMTELEQQQFDEFCKQMQPPGE.

Residues 1–23 show a composition bias toward basic and acidic residues; that stretch reads MDPPARKEKSKVKEPAFRVEKAK. Residues 1–30 are disordered; the sequence is MDPPARKEKSKVKEPAFRVEKAKQKSAQQE. Residues 5–52 adopt a coiled-coil conformation; sequence ARKEKSKVKEPAFRVEKAKQKSAQQELKQRQRAEIYALNRVMTELEQQ.

Belongs to the SVBP family. Interacts with VASH1 and VASH2. In terms of tissue distribution, highly expressed in bone marrow, spleen and testis.

It is found in the cytoplasm. The protein resides in the secreted. The protein localises to the cytoskeleton. Its function is as follows. Enhances the tyrosine carboxypeptidase activity of VASH1 and VASH2, thereby promoting the removal of the C-terminal tyrosine residue of alpha-tubulin. Also required to enhance the solubility and secretion of VASH1 and VASH2. Plays a role in axon and excitatory synapse formation. In Mus musculus (Mouse), this protein is Small vasohibin-binding protein.